The sequence spans 618 residues: Protein fem-1 homolog C (618 aa).

ANK repeat units follow at residues 2 to 31 (DLKT…DREV), 40 to 70 (NGAT…PVEL), 82 to 111 (EGAP…SVNN), 115 to 144 (TNST…DLEV), 148 to 177 (HGHT…DVNR), 181 to 210 (KGNT…SMEK), and 213 to 243 (YGMT…GLAE). TPR repeat units lie at residues 245-279 (ISAL…RHSE) and 337-370 (SYYI…QQSN). 2 ANK repeats span residues 482-524 (NGFS…DVNS) and 528-557 (DDNS…HFDS).

The protein belongs to the fem-1 family. As to quaternary structure, component of a CRL2 E3 ubiquitin-protein ligase complex, also named ECS (Elongin BC-CUL2/5-SOCS-box protein) complex.

It participates in protein modification; protein ubiquitination. Substrate-recognition component of a Cul2-RING (CRL2) E3 ubiquitin-protein ligase complex of the DesCEND (destruction via C-end degrons) pathway, which recognizes a C-degron located at the extreme C terminus of target proteins, leading to their ubiquitination and degradation. The C-degron recognized by the DesCEND pathway is usually a motif of less than ten residues and can be present in full-length proteins, truncated proteins or proteolytically cleaved forms. The CRL2(FEM1C) complex specifically recognizes proteins with an arginine at the C-terminus: recognizes and binds proteins ending with -Lys/Arg-Xaa-Arg and -Lys/Arg-Xaa-Xaa-Arg C-degrons, leading to their ubiquitination and degradation. The protein is Protein fem-1 homolog C of Danio rerio (Zebrafish).